We begin with the raw amino-acid sequence, 196 residues long: DnaA initiator-associating protein DiaA (196 aa).

In terms of domain architecture, SIS spans 34-196 (LVQSLLNGNK…DSTLFPHQDE (163 aa)).

Belongs to the SIS family. DiaA subfamily. Homotetramer; dimer of dimers.

Required for the timely initiation of chromosomal replication via direct interactions with the DnaA initiator protein. The chain is DnaA initiator-associating protein DiaA from Serratia proteamaculans (strain 568).